A 478-amino-acid polypeptide reads, in one-letter code: tRNA(Ile)-lysidine synthase (478 aa).

27–32 (SGGSDS) contributes to the ATP binding site.

Belongs to the tRNA(Ile)-lysidine synthase family.

The protein localises to the cytoplasm. The enzyme catalyses cytidine(34) in tRNA(Ile2) + L-lysine + ATP = lysidine(34) in tRNA(Ile2) + AMP + diphosphate + H(+). Functionally, ligates lysine onto the cytidine present at position 34 of the AUA codon-specific tRNA(Ile) that contains the anticodon CAU, in an ATP-dependent manner. Cytidine is converted to lysidine, thus changing the amino acid specificity of the tRNA from methionine to isoleucine. In Rickettsia rickettsii (strain Iowa), this protein is tRNA(Ile)-lysidine synthase.